Reading from the N-terminus, the 438-residue chain is Glutamyl-tRNA(Gln) amidotransferase subunit D (438 aa).

The region spanning 92–422 (PTITILGTGG…REAKKMMLTN (331 aa)) is the Asparaginase/glutaminase domain. Residues Thr102, Thr178, Asp179, and Lys256 contribute to the active site.

Belongs to the asparaginase 1 family. GatD subfamily. In terms of assembly, heterodimer of GatD and GatE.

It catalyses the reaction L-glutamyl-tRNA(Gln) + L-glutamine + ATP + H2O = L-glutaminyl-tRNA(Gln) + L-glutamate + ADP + phosphate + H(+). Allows the formation of correctly charged Gln-tRNA(Gln) through the transamidation of misacylated Glu-tRNA(Gln) in organisms which lack glutaminyl-tRNA synthetase. The reaction takes place in the presence of glutamine and ATP through an activated gamma-phospho-Glu-tRNA(Gln). The GatDE system is specific for glutamate and does not act on aspartate. In Pyrococcus furiosus (strain ATCC 43587 / DSM 3638 / JCM 8422 / Vc1), this protein is Glutamyl-tRNA(Gln) amidotransferase subunit D.